The chain runs to 359 residues: Alanine racemase, biosynthetic (359 aa).

Lysine 34 functions as the Proton acceptor; specific for D-alanine in the catalytic mechanism. Position 34 is an N6-(pyridoxal phosphate)lysine (lysine 34). Arginine 129 serves as a coordination point for substrate. Tyrosine 255 acts as the Proton acceptor; specific for L-alanine in catalysis. Position 303 (methionine 303) interacts with substrate.

Belongs to the alanine racemase family. In terms of assembly, monomer but homodimer in the presence of the substrate. The cofactor is pyridoxal 5'-phosphate.

The catalysed reaction is L-alanine = D-alanine. The protein operates within amino-acid biosynthesis; D-alanine biosynthesis; D-alanine from L-alanine: step 1/1. Its pathway is cell wall biogenesis; peptidoglycan biosynthesis. In terms of biological role, catalyzes the interconversion of L-alanine and D-alanine. The sequence is that of Alanine racemase, biosynthetic (alr) from Shigella dysenteriae.